Consider the following 203-residue polypeptide: FMN-dependent NADH:quinone oxidoreductase (203 aa).

143 to 146 is an FMN binding site; the sequence is SNGG.

It belongs to the azoreductase type 1 family. As to quaternary structure, homodimer. It depends on FMN as a cofactor.

The catalysed reaction is 2 a quinone + NADH + H(+) = 2 a 1,4-benzosemiquinone + NAD(+). It carries out the reaction N,N-dimethyl-1,4-phenylenediamine + anthranilate + 2 NAD(+) = 2-(4-dimethylaminophenyl)diazenylbenzoate + 2 NADH + 2 H(+). Its function is as follows. Quinone reductase that provides resistance to thiol-specific stress caused by electrophilic quinones. Functionally, also exhibits azoreductase activity. Catalyzes the reductive cleavage of the azo bond in aromatic azo compounds to the corresponding amines. The sequence is that of FMN-dependent NADH:quinone oxidoreductase from Streptococcus suis (strain 98HAH33).